The sequence spans 120 residues: Small ribosomal subunit protein bS16 (120 aa).

The disordered stretch occupies residues 81–120 (GLAKRPARNNPQKAEPGEKAKERAAKRAEKAAAPAEDAAA). Residues 95–110 (EPGEKAKERAAKRAEK) are compositionally biased toward basic and acidic residues. A compositionally biased stretch (low complexity) spans 111–120 (AAAPAEDAAA).

This sequence belongs to the bacterial ribosomal protein bS16 family.

In Methylobacterium radiotolerans (strain ATCC 27329 / DSM 1819 / JCM 2831 / NBRC 15690 / NCIMB 10815 / 0-1), this protein is Small ribosomal subunit protein bS16.